Here is a 314-residue protein sequence, read N- to C-terminus: MSLASGPSSKLLLFSLGMGLVSGSKCPNKCVCQDQEVACIDLHLTEYPADIPLNTRRLYLNNNKITSLPALQLGFLSDLVYLDCQNNRIREVMDYTFIGIFRLIYLDLSSNNLTSISPFSFSVLTNLVRLNISHNPHLLYLDKYVFANTTSLRYLDLRNTGLHIIDHNGFHHLVVLQTLYLSGNPWICNCSFLDFTIHLLVSHMDHPDAQNATCTEPAELKGWPITKVGNPLQYMCITHLDQQDYIFLLLIGFCIFAAGTVAAWLTGVCAVLYQNALRTSSGDDTEDETGSRFANQIFRSNTHLGPIRRFPELI.

The N-terminal stretch at 1-23 (MSLASGPSSKLLLFSLGMGLVSG) is a signal peptide. In terms of domain architecture, LRRNT spans 24 to 53 (SKCPNKCVCQDQEVACIDLHLTEYPADIPL). The Extracellular portion of the chain corresponds to 24 to 244 (SKCPNKCVCQ…MCITHLDQQD (221 aa)). 2 disulfide bridges follow: Cys26-Cys32 and Cys30-Cys39. 5 LRR repeats span residues 54–73 (NTRR…ALQL), 78–99 (DLVY…TFIG), 102–123 (RLIY…SFSV), 126–148 (NLVR…VFAN), and 151–172 (SLRY…GFHH). Residues Asn112, Asn131, and Asn148 are each glycosylated (N-linked (GlcNAc...) asparagine). In terms of domain architecture, LRRCT spans 184–238 (NPWICNCSFLDFTIHLLVSHMDHPDAQNATCTEPAELKGWPITKVGNPLQYMCIT). Cystine bridges form between Cys188/Cys214 and Cys190/Cys236. N-linked (GlcNAc...) asparagine glycans are attached at residues Asn189 and Asn211. The chain crosses the membrane as a helical span at residues 245 to 265 (YIFLLLIGFCIFAAGTVAAWL). At 266 to 314 (TGVCAVLYQNALRTSSGDDTEDETGSRFANQIFRSNTHLGPIRRFPELI) the chain is on the cytoplasmic side.

As to quaternary structure, interacts with KCNMA1. Interacts with KCNU1; this interaction may be required for LRRC52 stability and changes the channel gating properties. N-glycosylated. In terms of tissue distribution, testis-specific (at protein level). At the mRNA level, also detected in kidney, ventricle, spinal cord and skeletal muscle, although at lower levels compared to testis. Expression in testis at the protein level requires the presence of KCNU1.

The protein localises to the cell membrane. Auxiliary protein of the large-conductance, voltage and calcium-activated potassium channel (BK alpha). Modulates gating properties by producing a marked shift in the BK channel's voltage dependence of activation in the hyperpolarizing direction, and in the absence of calcium. KCNU1 channel auxiliary protein. Modulates KCNU1 gating properties, shifting KCNU1 gating to more negative potentials at a given pH. This Mus musculus (Mouse) protein is Leucine-rich repeat-containing protein 52 (Lrrc52).